The following is a 262-amino-acid chain: MDINASRALANVYDLPDDFFPKIDDLVRDAKDALEPYWKSDSIKKHVLIATHFVDLIEDFWQTTQGMHEIAESLRAVIPPTTAPVPTGYLIQHEEAEEIPLGDLFKHQEERIVSFQPDYPITARIHAHLKAYAKINEESLDRARRLLWWHYNCLLWGEANVTNYISRLRTWLSTPEKYRGRDAPTIEAITRPIQVAQGGRKTSSGTRKPRGLEPRRRKVKTTFVYGRRRSKSRERRAPSPQRAGSPLPRSSSSHHRSPSPRK.

Positions 183 to 262 (APTIEAITRP…SHHRSPSPRK (80 aa)) are disordered. The Bipartite nuclear localization signal motif lies at 215 to 233 (RRRKVKTTFVYGRRRSKSR). A compositionally biased stretch (basic residues) spans 215 to 234 (RRRKVKTTFVYGRRRSKSRE). 3 positions are modified to phosphoserine; by host: Ser-232, Ser-239, and Ser-245. Over residues 252-262 (SSHHRSPSPRK) the composition is skewed to basic residues. Positions 254–260 (HHRSPSP) are RNA binding.

The protein belongs to the avihepadnavirus core antigen family. Homodimerizes, then multimerizes.

The protein localises to the virion. It localises to the host cytoplasm. In terms of biological role, self assembles to form an icosahedral capsid. Most capsid appear to be large particles with an icosahedral symmetry of T=4 and consist of 240 copies of capsid protein, though a fraction forms smaller T=3 particles consisting of 180 capsid proteins. Entering capsid are transported along microtubules to the nucleus. Phosphorylation of the capsid is thought to induce exposure of nuclear localization signal in the C-terminal portion of the capsid protein that allows binding to the nuclear pore complex via the importin (karyopherin-) alpha and beta. Capsids are imported in intact form through the nuclear pore into the nuclear basket, where it probably binds NUP153. Only capsids that contain the mature viral genome can release the viral DNA and capsid protein into the nucleoplasm. Immature capsids get stucked in the basket. Capsids encapsulate the pre-genomic RNA and the P protein. Pre-genomic RNA is reverse transcribed into DNA while the capsid is still in the cytoplasm. The capsid can then either be directed to the nucleus, providing more genome for transcription, or bud through the endoplasmic reticulum to provide new virions. The sequence is that of Capsid protein (C) from Anas (ducks).